The chain runs to 141 residues: Nucleoside diphosphate kinase (141 aa).

ATP is bound by residues Lys-11, Phe-59, Arg-87, Thr-93, Arg-104, and Asn-114. Residue His-117 is the Pros-phosphohistidine intermediate of the active site.

This sequence belongs to the NDK family. As to quaternary structure, homotetramer. Mg(2+) is required as a cofactor.

Its subcellular location is the cytoplasm. It carries out the reaction a 2'-deoxyribonucleoside 5'-diphosphate + ATP = a 2'-deoxyribonucleoside 5'-triphosphate + ADP. It catalyses the reaction a ribonucleoside 5'-diphosphate + ATP = a ribonucleoside 5'-triphosphate + ADP. In terms of biological role, major role in the synthesis of nucleoside triphosphates other than ATP. The ATP gamma phosphate is transferred to the NDP beta phosphate via a ping-pong mechanism, using a phosphorylated active-site intermediate. The protein is Nucleoside diphosphate kinase of Pseudomonas putida (strain ATCC 47054 / DSM 6125 / CFBP 8728 / NCIMB 11950 / KT2440).